A 180-amino-acid polypeptide reads, in one-letter code: Large ribosomal subunit protein uL5 (180 aa).

This sequence belongs to the universal ribosomal protein uL5 family. In terms of assembly, part of the 50S ribosomal subunit; part of the 5S rRNA/L5/L18/L25 subcomplex. Contacts the 5S rRNA and the P site tRNA. Forms a bridge to the 30S subunit in the 70S ribosome.

This is one of the proteins that bind and probably mediate the attachment of the 5S RNA into the large ribosomal subunit, where it forms part of the central protuberance. In the 70S ribosome it contacts protein S13 of the 30S subunit (bridge B1b), connecting the 2 subunits; this bridge is implicated in subunit movement. Contacts the P site tRNA; the 5S rRNA and some of its associated proteins might help stabilize positioning of ribosome-bound tRNAs. The chain is Large ribosomal subunit protein uL5 from Streptococcus suis (strain 05ZYH33).